Reading from the N-terminus, the 363-residue chain is Phosphoserine aminotransferase (363 aa).

An L-glutamate-binding site is contributed by R42. Pyridoxal 5'-phosphate is bound by residues 76-77, W102, T156, D175, and Q198; that span reads GR. N6-(pyridoxal phosphate)lysine is present on K199. 240-241 contacts pyridoxal 5'-phosphate; it reads NT.

Belongs to the class-V pyridoxal-phosphate-dependent aminotransferase family. SerC subfamily. In terms of assembly, homodimer. Requires pyridoxal 5'-phosphate as cofactor.

It localises to the cytoplasm. It carries out the reaction O-phospho-L-serine + 2-oxoglutarate = 3-phosphooxypyruvate + L-glutamate. It catalyses the reaction 4-(phosphooxy)-L-threonine + 2-oxoglutarate = (R)-3-hydroxy-2-oxo-4-phosphooxybutanoate + L-glutamate. The protein operates within amino-acid biosynthesis; L-serine biosynthesis; L-serine from 3-phospho-D-glycerate: step 2/3. It functions in the pathway cofactor biosynthesis; pyridoxine 5'-phosphate biosynthesis; pyridoxine 5'-phosphate from D-erythrose 4-phosphate: step 3/5. Catalyzes the reversible conversion of 3-phosphohydroxypyruvate to phosphoserine and of 3-hydroxy-2-oxo-4-phosphonooxybutanoate to phosphohydroxythreonine. This chain is Phosphoserine aminotransferase, found in Shewanella denitrificans (strain OS217 / ATCC BAA-1090 / DSM 15013).